The sequence spans 387 residues: ATP phosphoribosyltransferase regulatory subunit (387 aa).

The protein belongs to the class-II aminoacyl-tRNA synthetase family. HisZ subfamily. In terms of assembly, heteromultimer composed of HisG and HisZ subunits.

Its subcellular location is the cytoplasm. The protein operates within amino-acid biosynthesis; L-histidine biosynthesis; L-histidine from 5-phospho-alpha-D-ribose 1-diphosphate: step 1/9. Its function is as follows. Required for the first step of histidine biosynthesis. May allow the feedback regulation of ATP phosphoribosyltransferase activity by histidine. The chain is ATP phosphoribosyltransferase regulatory subunit from Polynucleobacter asymbioticus (strain DSM 18221 / CIP 109841 / QLW-P1DMWA-1) (Polynucleobacter necessarius subsp. asymbioticus).